The sequence spans 230 residues: Ropporin-1-like protein (230 aa).

The 30-residue stretch at 17 to 46 (PELPDILKQFTKAAIRTQPADVLRWSAGYF) folds into the RIIa domain.

This sequence belongs to the ropporin family. In terms of assembly, component of the axonemal radial spoke complex 1 (RS1), at least composed of spoke head proteins RSPH1, RSPH3, RSPH9 and the cilia-specific component RSPH4A or sperm-specific component RSPH6A, spoke stalk proteins RSPH14, DNAJB13, DYDC1, ROPN1L and NME5, and the anchor protein IQUB. Interacts with FSCB; the interaction increases upon spermatozoa capacitation conditions. May interact with AKAP3. Interacts with CFAP61. Post-translationally, sumoylated, sumoylation decreases upon spermatozoa capacitation conditions.

The protein resides in the cell projection. It is found in the cilium. The protein localises to the flagellum. Functionally, functions as part of axonemal radial spoke complexes that play an important part in the motility of sperm and cilia. Important for male fertility. With ROPN1, involved in fibrous sheath integrity and sperm motility, plays a role in PKA-dependent signaling processes required for spermatozoa capacitation. This is Ropporin-1-like protein (ROPN1L) from Homo sapiens (Human).